A 70-amino-acid chain; its full sequence is Conotoxin ArMKLT2-0112 (70 aa).

The first 22 residues, 1–22 (MKLTCVLIIAVLFLTACQLTTG), serve as a signal peptide directing secretion. The propeptide occupies 23 to 40 (EQKDHALRSTDKNSKLTR). Position 41 is a pyrrolidone carboxylic acid (glutamine 41). 3 disulfide bridges follow: cysteine 42/cysteine 56, cysteine 49/cysteine 60, and cysteine 55/cysteine 67.

The protein belongs to the conotoxin O1 superfamily. As to expression, expressed by the venom duct.

The protein resides in the secreted. In Conus arenatus (Sand-dusted cone), this protein is Conotoxin ArMKLT2-0112.